The following is a 66-amino-acid chain: Probable Sec-independent protein translocase protein TatE (66 aa).

A helical membrane pass occupies residues 1–21 (MEGISITKLLVIAVLIVLLFG). A disordered region spans residues 46–66 (ETPAAKKSDGAEAAPRVENKE).

This sequence belongs to the TatA/E family. TatE subfamily.

It is found in the cell inner membrane. In terms of biological role, part of the twin-arginine translocation (Tat) system that transports large folded proteins containing a characteristic twin-arginine motif in their signal peptide across membranes. TatE shares overlapping functions with TatA. In Edwardsiella piscicida, this protein is Probable Sec-independent protein translocase protein TatE.